A 460-amino-acid chain; its full sequence is MLKIYNTLTRQKEEFKPITAGKVGMYVCGVTIYDLCHIGHGRTFVSFDVVSRYLRYLGYDLTFVRNITDIDDKIIKRAAENGESCESLTERLIGDMHADFDALNMKRPDVEPRATQFIAEIIELVEKLIERGFAYVADNGDVMFEVGKFDEYGKLSKQDLDQLQAGARVDIETAKRSPLDFVLWKMSKPGEPTWESPWGPGRPGWHIECSAMNSTILGDHFDIHGGGSDLQFPHHENEIAQSCCAHDTKYVNTWMHSGMVMVDREKMSKSLGNFFTIRDVLGHYDAETVRYFLMSGHYRSQLNYSEDNLNQARASLERLYTSLRGLDLNAAPAGGEEYVSRFTAAMNDDFNTPEAYSVLFDMAREVNRLKTESVEKASELGALMRELADVIGILYQDPEAFLKGNAGNDDEVAEIEALIKLRNDSRASKDWANADMARDKLTEMGIVLEDGPEGTTWRRK.

Cys-28 is a Zn(2+) binding site. Positions 30–40 (VTIYDLCHIGH) match the 'HIGH' region motif. The Zn(2+) site is built by Cys-209, His-234, and Glu-238. Positions 266-270 (KMSKS) match the 'KMSKS' region motif. Residue Lys-269 coordinates ATP.

It belongs to the class-I aminoacyl-tRNA synthetase family. Monomer. Zn(2+) serves as cofactor.

Its subcellular location is the cytoplasm. It catalyses the reaction tRNA(Cys) + L-cysteine + ATP = L-cysteinyl-tRNA(Cys) + AMP + diphosphate. This Vibrio parahaemolyticus serotype O3:K6 (strain RIMD 2210633) protein is Cysteine--tRNA ligase.